The chain runs to 245 residues: Probable phosphatase YcdX (245 aa).

Zn(2+)-binding residues include histidine 7, histidine 9, histidine 15, histidine 40, glutamate 73, histidine 101, histidine 131, aspartate 192, and histidine 194.

Belongs to the PHP family. Homotrimer. It depends on Zn(2+) as a cofactor.

This chain is Probable phosphatase YcdX, found in Salmonella arizonae (strain ATCC BAA-731 / CDC346-86 / RSK2980).